We begin with the raw amino-acid sequence, 736 residues long: MRNEPQITPELVAAHGLKPDEYERILKLIGREPTFTELGIFSAMWNEHCSYKSSRIHLKGLPTKAPWVIQGPGENAGVIDIGDGQAVVFKMESHNHPSYIEPYQGATTGVGGILRDVFTMGARPIACLNALSFGAPEHPKTRHLVSGVVAGIGGYGNSFGVPTVGGQTRFHTRYDGNILVNAMAVGLADADKIFYAAASGVNMPIVYLGSKTGRDGIHGASMASAEFDDSSEEKRPTVQVGDPFAEKLLLEACLEIMAADCVIAIQDMGAAGLTCSAVEMGAKGDLGVDLDLDSVPTRETGMSAYEMMLSESQERMLMVLKPEKEKEAEAIFRKWGLDFAVVGYTTPSKRFVVKHGGDVMADLPIKELGDEAPLYDRPHVASPALPVIHAREVKAPMAIIPALEKLIATPDLCSKRWIWEQYDHVILGNTVQRPGGDAAVVRVQDGPKGLALTVDVTPRYCEADPFEGGKQAVAEAWRNITAVGGRPLAITDNLNFGNPERPEIMGQFVGCLKGISEACRALDFPVVSGNVSLYNETNGRAILPTPSIGGVGLLDDFTKSASIAFKTEGEAILLIGETHGWLGQSVYLRDVCGREEGAPPPVDLAAEKRIGDVVRGMIHAGTATAAHDLSDGGLLVALAEMAMASGIGARLLAAPASIVPHAYWFGEDQARYLVTVPETEAGRVLAKMRGANVPCTRIGTTGGTALAIAGEASVEVATLRTRFESWLPGYMGGAAA.

Residue histidine 48 is part of the active site. Residues tyrosine 51 and lysine 90 each coordinate ATP. Glutamate 92 serves as a coordination point for Mg(2+). Residues 93-96 (SHNH) and arginine 115 each bind substrate. Histidine 94 serves as the catalytic Proton acceptor. Residue aspartate 116 participates in Mg(2+) binding. Glutamine 239 is a binding site for substrate. A Mg(2+)-binding site is contributed by aspartate 267. 311–313 (ESQ) serves as a coordination point for substrate. ATP contacts are provided by aspartate 492 and glycine 529. Asparagine 530 lines the Mg(2+) pocket. Serine 532 contacts substrate.

This sequence belongs to the FGAMS family. As to quaternary structure, monomer. Part of the FGAM synthase complex composed of 1 PurL, 1 PurQ and 2 PurS subunits.

Its subcellular location is the cytoplasm. It carries out the reaction N(2)-formyl-N(1)-(5-phospho-beta-D-ribosyl)glycinamide + L-glutamine + ATP + H2O = 2-formamido-N(1)-(5-O-phospho-beta-D-ribosyl)acetamidine + L-glutamate + ADP + phosphate + H(+). It functions in the pathway purine metabolism; IMP biosynthesis via de novo pathway; 5-amino-1-(5-phospho-D-ribosyl)imidazole from N(2)-formyl-N(1)-(5-phospho-D-ribosyl)glycinamide: step 1/2. Part of the phosphoribosylformylglycinamidine synthase complex involved in the purines biosynthetic pathway. Catalyzes the ATP-dependent conversion of formylglycinamide ribonucleotide (FGAR) and glutamine to yield formylglycinamidine ribonucleotide (FGAM) and glutamate. The FGAM synthase complex is composed of three subunits. PurQ produces an ammonia molecule by converting glutamine to glutamate. PurL transfers the ammonia molecule to FGAR to form FGAM in an ATP-dependent manner. PurS interacts with PurQ and PurL and is thought to assist in the transfer of the ammonia molecule from PurQ to PurL. The polypeptide is Phosphoribosylformylglycinamidine synthase subunit PurL (Bradyrhizobium sp. (strain ORS 278)).